A 333-amino-acid chain; its full sequence is MNGFGAAVVITGCGSATPAQFLSNEELSQIVETSDEWIKSRTGIGKRHLADRSVSLSQLAAQAAIKALEMAQVSPRDIDLILLATSTPDDLFGSAAQVQSQIGANRAIAFDLTAACSGFLVGLVTATQFIRTGTYRNVLVIGADVLSRWVDWNDRATCVLFGDGAGAVVCQANDTKDNILGFELHSDGSQNGSLNLAYEGEELPLKQGIRVQKGTYKPLRMNGREVYRFAVAKVPEVIEKALYRANLTTSDIDWLVLHQANQRIMDAVSERLKLPPEKVISNLSEYGNTSAASIPLALDEAVRSGKVKKGDIIASSGFGAGLTWGGIIFRWGD.

Residues cysteine 116 and histidine 258 contribute to the active site. An ACP-binding region spans residues glutamine 259 to arginine 263. Asparagine 288 is an active-site residue.

The protein belongs to the thiolase-like superfamily. FabH family. As to quaternary structure, homodimer.

The protein resides in the cytoplasm. It catalyses the reaction malonyl-[ACP] + acetyl-CoA + H(+) = 3-oxobutanoyl-[ACP] + CO2 + CoA. It functions in the pathway lipid metabolism; fatty acid biosynthesis. Catalyzes the condensation reaction of fatty acid synthesis by the addition to an acyl acceptor of two carbons from malonyl-ACP. Catalyzes the first condensation reaction which initiates fatty acid synthesis and may therefore play a role in governing the total rate of fatty acid production. Possesses both acetoacetyl-ACP synthase and acetyl transacylase activities. Its substrate specificity determines the biosynthesis of branched-chain and/or straight-chain of fatty acids. In Microcystis aeruginosa (strain NIES-843 / IAM M-2473), this protein is Beta-ketoacyl-[acyl-carrier-protein] synthase III.